A 204-amino-acid chain; its full sequence is 8-oxoguanine DNA glycosylase/AP lyase (204 aa).

Active-site residues include Lys129 and Asp147.

The protein belongs to the type-2 OGG1 family.

The catalysed reaction is 2'-deoxyribonucleotide-(2'-deoxyribose 5'-phosphate)-2'-deoxyribonucleotide-DNA = a 3'-end 2'-deoxyribonucleotide-(2,3-dehydro-2,3-deoxyribose 5'-phosphate)-DNA + a 5'-end 5'-phospho-2'-deoxyribonucleoside-DNA + H(+). Functionally, catalyzes the excision of an oxidatively damaged form of guanine (7,8-dihydro-8-oxoguanine = 8-oxoG) from DNA. Also cleaves the DNA backbone at apurinic/apyrimidinic sites (AP sites). In Thermoplasma acidophilum (strain ATCC 25905 / DSM 1728 / JCM 9062 / NBRC 15155 / AMRC-C165), this protein is 8-oxoguanine DNA glycosylase/AP lyase.